A 107-amino-acid chain; its full sequence is uncharacterized protein (107 aa).

The helical transmembrane segment at 9–31 threads the bilayer; that stretch reads AAAIITAPTILAMMSTVLRALIF.

It localises to the membrane. This is an uncharacterized protein from Archaeoglobus fulgidus (strain ATCC 49558 / DSM 4304 / JCM 9628 / NBRC 100126 / VC-16).